Reading from the N-terminus, the 497-residue chain is GTPase-activating protein GYP8 (497 aa).

Positions 69-281 (FVNNSLRKDC…QIFDMTISMQ (213 aa)) constitute a Rab-GAP TBC domain.

The chain is GTPase-activating protein GYP8 (GYP8) from Saccharomyces cerevisiae (strain ATCC 204508 / S288c) (Baker's yeast).